The primary structure comprises 256 residues: Hydroxypyruvate/pyruvate aldolase (256 aa).

H48 serves as the catalytic Proton acceptor. Positions 152 and 178 each coordinate a divalent metal cation.

Belongs to the HpcH/HpaI aldolase family. A divalent metal cation serves as cofactor.

The catalysed reaction is D-glyceraldehyde + pyruvate = 2-dehydro-3-deoxy-L-galactonate. Functionally, aldolase which can catalyze in vitro the aldolisation reaction between hydroxypyruvate (HPA) or pyruvate (PA) and D-glyceraldehyde (D-GA). The condensation of pyruvate and D-glyceraldehyde produces 2-dehydro-3-deoxy-L-galactonate as the major product. Has weak activity with hydroxypyruvate and D-glyceraldehyde. The sequence is that of Hydroxypyruvate/pyruvate aldolase from Roseobacter denitrificans (strain ATCC 33942 / OCh 114) (Erythrobacter sp. (strain OCh 114)).